The sequence spans 275 residues: MRKVLRVKKNIKIARIVPLVLLLVACGRGEVTAQSSSGWDQLVYLFARAIQWLSFDGSIGVGIILFTLTIRLMLMPLFNMQIKSSQKMQDIQPELRELQKKYAGKDTQTRMKLAEESQALYKKYGVNPYASLLPLLIQMPVMIALFQALTRVSFLKTGTFLWVELAQHDHLYLLPVLAAVFTFLSTWLTNLATKEKNVMMTVMIYVMPLMIFFMGFNLASGVVLYWTVSNAFQVVQLLLLNNPFKIIAERQRLANEEKERRLRERRARKKAMKRK.

A signal peptide spans 1–25 (MRKVLRVKKNIKIARIVPLVLLLVA). Residue cysteine 26 is the site of N-palmitoyl cysteine attachment. A lipid anchor (S-diacylglycerol cysteine) is attached at cysteine 26. 5 helical membrane-spanning segments follow: residues 58–78 (SIGVGIILFTLTIRLMLMPLF), 129–149 (YASLLPLLIQMPVMIALFQAL), 171–191 (LYLLPVLAAVFTFLSTWLTNL), 198–216 (VMMTVMIYVMPLMIFFMGF), and 222–240 (VVLYWTVSNAFQVVQLLLL).

It belongs to the OXA1/ALB3/YidC family. Type 2 subfamily.

Its subcellular location is the cell membrane. Functionally, required for the insertion and/or proper folding and/or complex formation of integral membrane proteins into the membrane. Involved in integration of membrane proteins that insert both dependently and independently of the Sec translocase complex, as well as at least some lipoproteins. This Streptococcus pyogenes serotype M6 (strain ATCC BAA-946 / MGAS10394) protein is Membrane protein insertase YidC 1.